The sequence spans 262 residues: Probable proteasome subunit beta type-7 (262 aa).

Belongs to the peptidase T1B family. As to quaternary structure, the 26S proteasome consists of a 20S proteasome core and two 19S regulatory subunits. The 20S proteasome core is composed of 28 subunits that are arranged in four stacked rings, resulting in a barrel-shaped structure. The two end rings are each formed by seven alpha subunits, and the two central rings are each formed by seven beta subunits. The catalytic chamber with the active sites is on the inside of the barrel.

It is found in the cytoplasm. Its subcellular location is the nucleus. Its function is as follows. Non-catalytic component of the proteasome, a multicatalytic proteinase complex which is characterized by its ability to cleave peptides with Arg, Phe, Tyr, Leu, and Glu adjacent to the leaving group at neutral or slightly basic pH. The proteasome has an ATP-dependent proteolytic activity. This is Probable proteasome subunit beta type-7 from Schizosaccharomyces pombe (strain 972 / ATCC 24843) (Fission yeast).